The primary structure comprises 174 residues: Early E1A protein (174 aa).

The segment at 40 to 48 is interaction with RB1 in competition with E2F1; that stretch reads PSLHDLFDL. Positions 106–110 match the LXCXE motif, interaction with host RB1 motif; it reads LLCLE. A zinc finger spans residues 145 to 163; it reads CLRCAYYQEQGENSICGLC.

The protein belongs to the adenoviridae E1A protein family. In terms of assembly, interacts with host UBE2I; this interaction interferes with polySUMOylation. Interacts with host RB1; this interaction induces the aberrant dissociation of RB1-E2F1 complex thereby disrupting the activity of RB1 and activating E2F1-regulated genes. Interacts with host ATF7; the interaction enhances ATF7-mediated viral transactivation activity which requires the zinc binding domains of both proteins. Isoform early E1A 32 kDa protein and isoform early E1A 26 kDa protein interact (via N-terminus) with CUL1 and E3 ubiquitin ligase RBX1; these interactions inhibit RBX1-CUL1-dependent elongation reaction of ubiquitin chains and attenuate ubiquitination of SCF(FBXW7) target proteins. Interacts (via PXLXP motif) with host ZMYND11/BS69 (via MYND-type zinc finger); this interaction inhibits E1A mediated transactivation. Interacts with host EP300; this interaction stimulates the acetylation of RB1 by recruiting EP300 and RB1 into a multimeric-protein complex. Interacts with host CTBP1 and CTBP2; this interaction seems to potentiate viral replication. Interacts with host DCAF7. Interacts with host DYRK1A. Interacts with host KPNA4; this interaction allows E1A import into the host nucleus. Interacts with host EP400; this interaction stabilizes MYC. Interacts with host TBP protein; this interaction probably disrupts the TBP-TATA complex.

The protein localises to the host nucleus. Its function is as follows. Plays a role in viral genome replication by driving entry of quiescent cells into the cell cycle. Stimulation of progression from G1 to S phase allows the virus to efficiently use the cellular DNA replicating machinery to achieve viral genome replication. E1A protein has both transforming and trans-activating activities. Induces the disassembly of the E2F1 transcription factor from RB1 by direct competition for the same binding site on RB1, with subsequent transcriptional activation of E2F1-regulated S-phase genes and of the E2 region of the adenoviral genome. Release of E2F1 leads to the ARF-mediated inhibition of MDM2 and causes TP53/p53 to accumulate because it is not targeted for degradation by MDM2-mediated ubiquitination anymore. This increase in TP53, in turn, would arrest the cell proliferation and direct its death but this effect is counteracted by the viral protein E1B-55K. Inactivation of the ability of RB1 to arrest the cell cycle is critical for cellular transformation, uncontrolled cellular growth and proliferation induced by viral infection. Interaction with RBX1 and CUL1 inhibits ubiquitination of the proteins targeted by SCF(FBXW7) ubiquitin ligase complex, and may be linked to unregulated host cell proliferation. The tumorigenesis-restraining activity of E1A may be related to the disruption of the host CtBP-CtIP complex through the CtBP binding motif. The sequence is that of Early E1A protein from Canine adenovirus serotype 1 (strain RI261) (CAdV-1).